We begin with the raw amino-acid sequence, 736 residues long: Neprilysin-2 (736 aa).

The Cytoplasmic segment spans residues 1 to 19; that stretch reads MRPDEEDGTTKSPGSRWTR. Residues 20–40 traverse the membrane as a helical; Signal-anchor for type II membrane protein segment; that stretch reads IWAIIALILLILFLLVLGAAI. Topologically, residues 41 to 736 are extracellular; that stretch reads YFYINYKDSS…MNPREKCRVW (696 aa). Residues 52–736 enclose the Peptidase M13 domain; it reads VCLSPGCIKT…MNPREKCRVW (685 aa). Cystine bridges form between cysteine 53–cysteine 58, cysteine 76–cysteine 721, cysteine 84–cysteine 681, cysteine 142–cysteine 399, and cysteine 608–cysteine 733. Positions 103 to 123 form a coiled coil; the sequence is FENLGQDLEFALKELLDENDE. Histidine 571 contributes to the Zn(2+) binding site. Glutamate 572 is a catalytic residue. Positions 575 and 633 each coordinate Zn(2+). Aspartate 637 acts as the Proton donor in catalysis.

The protein belongs to the peptidase M13 family. It depends on Zn(2+) as a cofactor. As to expression, expressed in muscle cells, GLR cells, SMB motor neurons and AIM interneurons.

The protein localises to the membrane. Required for olfactory plasticity, which is the change from positive chemotaxis to dispersal after prolonged exposure to an odorant. Thought to antagonise snet-1 by degrading excess snet-1 peptides and thus enabling olfactory plasticity. The chain is Neprilysin-2 from Caenorhabditis elegans.